Here is a 205-residue protein sequence, read N- to C-terminus: Small ribosomal subunit protein uS4 (205 aa).

The disordered stretch occupies residues 27–46; the sequence is LNKRDYAPGQHGQRRKGKPS. The S4 RNA-binding domain maps to 118-178; it reads HGHVLVNGKR…HVDHRLMKGT (61 aa).

This sequence belongs to the universal ribosomal protein uS4 family. As to quaternary structure, part of the 30S ribosomal subunit. Contacts protein S5. The interaction surface between S4 and S5 is involved in control of translational fidelity.

Functionally, one of the primary rRNA binding proteins, it binds directly to 16S rRNA where it nucleates assembly of the body of the 30S subunit. Its function is as follows. With S5 and S12 plays an important role in translational accuracy. The protein is Small ribosomal subunit protein uS4 of Granulibacter bethesdensis (strain ATCC BAA-1260 / CGDNIH1).